A 363-amino-acid chain; its full sequence is Exopolygalacturonase rpg13 (363 aa).

The N-terminal stretch at 1 to 26 is a signal peptide; that stretch reads MVKFLSLTSSVTALLLLSLGANGVAA. 3 N-linked (GlcNAc...) asparagine glycosylation sites follow: N121, N142, and N150. PbH1 repeat units lie at residues 143–173, 174–195, 197–217, 227–248, and 256–277; these read ATDV…DVSR, SSNV…AINE, VTNV…SVGS, VKTV…RIKT, and VSDI…LITT. D188 (proton donor) is an active-site residue. C190 and C207 are oxidised to a cystine. N-linked (GlcNAc...) asparagine glycosylation is present at N199. H211 is an active-site residue. N-linked (GlcNAc...) asparagine glycosylation is present at N321. A disulfide bridge connects residues C322 and C328. The stretch at 328–354 is one PbH1 6 repeat; the sequence is CTDFTLSGVKITKASNTPKNVCVNLDG.

The protein belongs to the glycosyl hydrolase 28 family. N-glycosylated.

Its subcellular location is the secreted. The enzyme catalyses [(1-&gt;4)-alpha-D-galacturonosyl](n) + H2O = alpha-D-galacturonate + [(1-&gt;4)-alpha-D-galacturonosyl](n-1). In terms of biological role, specific in hydrolyzing the terminal glycosidic bond of polygalacturonic acid and oligogalacturonates. Has no activity towards trigalacturonic acid. The sequence is that of Exopolygalacturonase rpg13 from Rhizopus delemar (strain RA 99-880 / ATCC MYA-4621 / FGSC 9543 / NRRL 43880) (Mucormycosis agent).